We begin with the raw amino-acid sequence, 507 residues long: L-amino-acid oxidase (507 aa).

Positions 1 to 19 are cleaved as a signal peptide; sequence MNVLFIFSLLFLAALESCA. Cys-29 and Cys-192 form a disulfide bridge. FAD-binding positions include 62-63, 82-83, Arg-90, and 106-109; these read MA, EA, and GPMR. Residue Arg-109 coordinates substrate. N-linked (GlcNAc...) asparagine glycans are attached at residues Asn-191 and Asn-213. Val-280 lines the FAD pocket. Cys-348 and Cys-429 are oxidised to a cystine. A glycan (N-linked (GlcNAc...) asparagine) is linked at Asn-378. Position 389 (Tyr-389) interacts with substrate. FAD-binding positions include Glu-473 and 480-485; that span reads GWIDST.

This sequence belongs to the flavin monoamine oxidase family. FIG1 subfamily. In terms of assembly, homodimer; non-covalently linked. The cofactor is FAD. As to expression, expressed by the venom gland.

It localises to the secreted. The catalysed reaction is an L-alpha-amino acid + O2 + H2O = a 2-oxocarboxylate + H2O2 + NH4(+). It carries out the reaction L-leucine + O2 + H2O = 4-methyl-2-oxopentanoate + H2O2 + NH4(+). In terms of biological role, catalyzes an oxidative deamination of predominantly hydrophobic and aromatic L-amino acids, thus producing hydrogen peroxide that may contribute to the diverse toxic effects of this enzyme. Shows activity on L-Leu. Exhibits diverse biological activities, such as hemorrhage, hemolysis, edema, apoptosis of vascular endothelial cells or tumor cell lines, antibacterial and antiparasitic activities. This protein induces platelet aggregation by both hydrogen peroxide production and binding to platelet membrane proteins (that would enhance the sensitivity of platelets to hydrogen peroxide). Effects of snake L-amino oxidases on platelets are controversial, since they either induce aggregation or inhibit agonist-induced aggregation. These different effects are probably due to different experimental conditions. In Naja atra (Chinese cobra), this protein is L-amino-acid oxidase.